The chain runs to 229 residues: 2,3-bisphosphoglycerate-dependent phosphoglycerate mutase (229 aa).

Residues 7-14 (RHGQSEWN), 20-21 (TG), arginine 59, 86-89 (ERHY), lysine 97, 113-114 (RR), and 182-183 (GN) contribute to the substrate site. Histidine 8 acts as the Tele-phosphohistidine intermediate in catalysis. Glutamate 86 functions as the Proton donor/acceptor in the catalytic mechanism.

This sequence belongs to the phosphoglycerate mutase family. BPG-dependent PGAM subfamily.

It carries out the reaction (2R)-2-phosphoglycerate = (2R)-3-phosphoglycerate. The protein operates within carbohydrate degradation; glycolysis; pyruvate from D-glyceraldehyde 3-phosphate: step 3/5. In terms of biological role, catalyzes the interconversion of 2-phosphoglycerate and 3-phosphoglycerate. This Listeria monocytogenes serotype 4b (strain F2365) protein is 2,3-bisphosphoglycerate-dependent phosphoglycerate mutase.